The following is a 256-amino-acid chain: Adenosine 5'-phosphosulfate reductase (256 aa).

[4Fe-4S] cluster contacts are provided by C120, C121, C203, and C206. C231 functions as the Nucleophile; cysteine thiosulfonate intermediate in the catalytic mechanism.

The protein belongs to the PAPS reductase family. CysH subfamily. It depends on [4Fe-4S] cluster as a cofactor.

It localises to the cytoplasm. The enzyme catalyses [thioredoxin]-disulfide + sulfite + AMP + 2 H(+) = adenosine 5'-phosphosulfate + [thioredoxin]-dithiol. It functions in the pathway sulfur metabolism; hydrogen sulfide biosynthesis; sulfite from sulfate. In terms of biological role, catalyzes the formation of sulfite from adenosine 5'-phosphosulfate (APS) using thioredoxin as an electron donor. This Allochromatium vinosum (strain ATCC 17899 / DSM 180 / NBRC 103801 / NCIMB 10441 / D) (Chromatium vinosum) protein is Adenosine 5'-phosphosulfate reductase.